The chain runs to 435 residues: Phospholipase A1 EG1, chloroplastic/mitochondrial (435 aa).

A chloroplast and mitochondrion-targeting transit peptide spans Met-1 to Gly-31. The GXSXG signature appears at Gly-264–Gly-268. Ser-266 serves as the catalytic Acyl-ester intermediate. Catalysis depends on charge relay system residues Asp-324 and His-371.

Belongs to the AB hydrolase superfamily. Lipase family.

It localises to the mitochondrion. The protein localises to the plastid. It is found in the chloroplast. The enzyme catalyses a 1,2-diacyl-sn-glycero-3-phosphocholine + H2O = a 2-acyl-sn-glycero-3-phosphocholine + a fatty acid + H(+). In terms of biological role, phospholipase that releases free fatty acids from phospholipids. Catalyzes the initial step of jasmonate (JA) biosynthesis. Required for the biosynthesis of endogenous JA in seedling, inflorescence and spikelets. Not essential for JA biosynthesis after wounding. Mediates spikelet development and specification of empty-glume identity. Functions in a high temperature-dependent manner to maintain floral developmental robustness under heat stress conditions. Functions by safeguarding the expression of several floral identity genes, such as MADS1, MADS6 and G1. In Oryza sativa subsp. indica (Rice), this protein is Phospholipase A1 EG1, chloroplastic/mitochondrial.